Reading from the N-terminus, the 376-residue chain is 26S proteasome non-ATPase regulatory subunit 13 (376 aa).

Residues 171-338 form the PCI domain; it reads SYYKDALRFL…KRVHMTWVQP (168 aa).

Component of the 19S proteasome regulatory particle complex. The 26S proteasome consists of a 20S core particle (CP) and two 19S regulatory subunits (RP). The regulatory particle is made of a lid composed of 9 subunits including PSMD13, a base containing 6 ATPases and few additional components.

Functionally, component of the 26S proteasome, a multiprotein complex involved in the ATP-dependent degradation of ubiquitinated proteins. This complex plays a key role in the maintenance of protein homeostasis by removing misfolded or damaged proteins, which could impair cellular functions, and by removing proteins whose functions are no longer required. Therefore, the proteasome participates in numerous cellular processes, including cell cycle progression, apoptosis, or DNA damage repair. This is 26S proteasome non-ATPase regulatory subunit 13 from Gallus gallus (Chicken).